We begin with the raw amino-acid sequence, 257 residues long: Protein UL133 (257 aa).

2 helical membrane-spanning segments follow: residues 14 to 34 and 45 to 65; these read WGVP…IWCL and PGIA…AYLI. Residues 149-232 are disordered; it reads PTVFVPPPSE…AMPQMPPGVA (84 aa). Residues 164-175 show a composition bias toward pro residues; that stretch reads VIPPQPPTPTSE. Residues 179–193 show a composition bias toward basic residues; sequence KKGRAKDKPKGRPKN. Residues 214 to 228 are compositionally biased toward pro residues; that stretch reads GGPPDASPPAMPQMP.

The protein localises to the host Golgi apparatus membrane. In Human cytomegalovirus (strain Merlin) (HHV-5), this protein is Protein UL133 (UL133).